Here is a 252-residue protein sequence, read N- to C-terminus: uncharacterized protein (252 aa).

2 positions are modified to phosphoserine: serine 195 and serine 209.

Testis-specific. Highly expressed in spermatocytes (at protein level).

Its function is as follows. Essential for normal spermatogenesis and male fertility. This is an uncharacterized protein from Mus musculus (Mouse).